Here is a 309-residue protein sequence, read N- to C-terminus: Clotting factor G beta subunit (309 aa).

Residues 1 to 31 (MDISFLVFITLSMALFSSNVTGTSVTSRVRR) form the signal peptide. 4 disulfide bridges follow: C38–C158, C74–C90, C205–C227, and C238–C268. The Peptidase S1 domain occupies 47-292 (IIGGGIATPH…YVNWLQEITF (246 aa)). Residue H89 is the Charge relay system of the active site. A glycan (N-linked (GlcNAc...) asparagine) is linked at N100. D138 acts as the Charge relay system in catalysis. The N-linked (GlcNAc...) asparagine glycan is linked to N206. The active-site Charge relay system is the S242.

It belongs to the peptidase S1 family. As to quaternary structure, clotting factor G is a heterodimer composed of two non-covalently associated subunits, alpha and beta. Upon activation, converted to a two-chain active form linked by a disulfide bond. Forms a covalent heterodimer with intracellular coagulation inhibitor 3/LICI-3. In terms of tissue distribution, expressed in the hemocytes (at protein level).

It catalyses the reaction Selective cleavage of 98-Arg-|-Ile-99 bond in Limulus proclotting enzyme to form active clotting enzyme.. Binding to (1-&gt;3)-beta-D-glucan to alpha subunit, induces autocatalysis and activation of beta subunit. Inhibited by intracellular coagulation inhibitor 3/LICI-3 and to a lesser extend by intracellular coagulation inhibitor 2/LICI-2. Component of the heterodimer clotting factor G which may play a role in defense mechanisms against fungi. Initiates a (1-&gt;3)-beta-glucan-sensing clotting pathway whereby the alpha subunit binds to glucans containing (1-&gt;3)-beta linkages, which are components of the fungal cell wall, and the beta subunit catalyzes the activation of proclotting enzyme. The protein is Clotting factor G beta subunit of Tachypleus tridentatus (Japanese horseshoe crab).